A 423-amino-acid polypeptide reads, in one-letter code: Serine--tRNA ligase (423 aa).

Thr229–Glu231 serves as a coordination point for L-serine. ATP is bound at residue Arg258–Glu260. Glu281 provides a ligand contact to L-serine. ATP is bound at residue Glu345–Ser348. An L-serine-binding site is contributed by Ser379.

Belongs to the class-II aminoacyl-tRNA synthetase family. Type-1 seryl-tRNA synthetase subfamily. In terms of assembly, homodimer. The tRNA molecule binds across the dimer.

It is found in the cytoplasm. It carries out the reaction tRNA(Ser) + L-serine + ATP = L-seryl-tRNA(Ser) + AMP + diphosphate + H(+). The enzyme catalyses tRNA(Sec) + L-serine + ATP = L-seryl-tRNA(Sec) + AMP + diphosphate + H(+). The protein operates within aminoacyl-tRNA biosynthesis; selenocysteinyl-tRNA(Sec) biosynthesis; L-seryl-tRNA(Sec) from L-serine and tRNA(Sec): step 1/1. Functionally, catalyzes the attachment of serine to tRNA(Ser). Is also able to aminoacylate tRNA(Sec) with serine, to form the misacylated tRNA L-seryl-tRNA(Sec), which will be further converted into selenocysteinyl-tRNA(Sec). The protein is Serine--tRNA ligase (serS1) of Methanosarcina barkeri (strain Fusaro / DSM 804).